We begin with the raw amino-acid sequence, 323 residues long: Cysteine synthase A (323 aa).

Residues Asn8 and Arg35 each contribute to the hydrogen sulfide site. Position 42 is an N6-(pyridoxal phosphate)lysine (Lys42). Pyridoxal 5'-phosphate-binding positions include Asn72 and 177 to 181 (GTGGT). Leu269 is a hydrogen sulfide binding site. Position 273 (Ser273) interacts with pyridoxal 5'-phosphate.

Belongs to the cysteine synthase/cystathionine beta-synthase family. As to quaternary structure, homodimer. Pyridoxal 5'-phosphate is required as a cofactor.

It carries out the reaction O-acetyl-L-serine + hydrogen sulfide = L-cysteine + acetate. The protein operates within amino-acid biosynthesis; L-cysteine biosynthesis; L-cysteine from L-serine: step 2/2. This chain is Cysteine synthase A (cysK), found in Escherichia coli O157:H7.